Here is a 221-residue protein sequence, read N- to C-terminus: 21 kDa seed protein (221 aa).

The signal sequence occupies residues 1 to 26 (MKTATAVVLLLFAFTSKSYFFGVANA). A disulfide bridge connects residues Cys-69 and Cys-116.

This sequence belongs to the protease inhibitor I3 (leguminous Kunitz-type inhibitor) family.

The chain is 21 kDa seed protein (ASP) from Theobroma cacao (Cacao).